Here is a 314-residue protein sequence, read N- to C-terminus: Lipoyl synthase (314 aa).

The disordered stretch occupies residues 1-24; the sequence is MMDTPIIRHPEKVRRPDNPSPRKP. Residues cysteine 53, cysteine 58, cysteine 64, cysteine 79, cysteine 83, cysteine 86, and serine 293 each coordinate [4Fe-4S] cluster. The Radical SAM core domain maps to 65-282; the sequence is WKRRHATFMI…ADIARGKGFL (218 aa). The span at 294-308 shows a compositional bias: basic and acidic residues; that stretch reads HHADRDFEDLRKARQ. Positions 294–314 are disordered; it reads HHADRDFEDLRKARQDAAATK.

Belongs to the radical SAM superfamily. Lipoyl synthase family. It depends on [4Fe-4S] cluster as a cofactor.

The protein resides in the cytoplasm. The enzyme catalyses [[Fe-S] cluster scaffold protein carrying a second [4Fe-4S](2+) cluster] + N(6)-octanoyl-L-lysyl-[protein] + 2 oxidized [2Fe-2S]-[ferredoxin] + 2 S-adenosyl-L-methionine + 4 H(+) = [[Fe-S] cluster scaffold protein] + N(6)-[(R)-dihydrolipoyl]-L-lysyl-[protein] + 4 Fe(3+) + 2 hydrogen sulfide + 2 5'-deoxyadenosine + 2 L-methionine + 2 reduced [2Fe-2S]-[ferredoxin]. Its pathway is protein modification; protein lipoylation via endogenous pathway; protein N(6)-(lipoyl)lysine from octanoyl-[acyl-carrier-protein]: step 2/2. Catalyzes the radical-mediated insertion of two sulfur atoms into the C-6 and C-8 positions of the octanoyl moiety bound to the lipoyl domains of lipoate-dependent enzymes, thereby converting the octanoylated domains into lipoylated derivatives. In Rhodospirillum rubrum (strain ATCC 11170 / ATH 1.1.1 / DSM 467 / LMG 4362 / NCIMB 8255 / S1), this protein is Lipoyl synthase.